Consider the following 242-residue polypeptide: Probable transcriptional regulatory protein LSL_0422 (242 aa).

Positions 1–21 are disordered; the sequence is MSGHSKWHNIQGRKNAQDAKR.

Belongs to the TACO1 family.

The protein resides in the cytoplasm. This chain is Probable transcriptional regulatory protein LSL_0422, found in Ligilactobacillus salivarius (strain UCC118) (Lactobacillus salivarius).